A 747-amino-acid chain; its full sequence is Probable cyclic nucleotide-gated ion channel 6 (747 aa).

The Cytoplasmic segment spans residues 1–117; the sequence is MFDTCGPKGV…DKFLLLCNKL (117 aa). The helical transmembrane segment at 118–138 threads the bilayer; sequence FVASCILAVSVDPLFLYLPFI. Residues 139–150 lie on the Extracellular side of the membrane; it reads NDKAKCVGIDRK. Residues 151-171 traverse the membrane as a helical segment; sequence LAIIVTTIRTVIDSFYLFHMA. Residues 172–205 are Cytoplasmic-facing; the sequence is LRFRTAYVAPSSRVFGRGELVIDPAQIAKRYLQQ. The chain crosses the membrane as a helical span at residues 206–226; it reads YFIIDLLSVLPVPQIIVWRFL. Topologically, residues 227 to 239 are extracellular; it reads YTSRGANVLATKQ. A helical transmembrane segment spans residues 240 to 260; the sequence is ALRYIVLVQYIPRFLRMYPLS. Residues 261–280 lie on the Cytoplasmic side of the membrane; that stretch reads SELKRTAGVFAETAWAGAAY. The helical transmembrane segment at 281–301 threads the bilayer; the sequence is YLLLYMLASHIVGALWYLLAL. At 302 to 407 the chain is on the extracellular side; sequence ERNNDCWSKA…GQGLETSTYP (106 aa). A helical transmembrane segment spans residues 408-428; it reads GEVIFSITLAIAGLLLFALLI. Residues 429-747 are Cytoplasmic-facing; it reads GNMQTYLQSL…PEPDFSAEDH (319 aa). A nucleoside 3',5'-cyclic phosphate contacts are provided by residues 514 to 638 and Asp-585; that span reads LFEN…SRQV. The tract at residues 630–645 is calmodulin-binding; that stretch reads FRRLHSRQVQHTFRFY. An IQ domain is found at 650–679; it reads RTWAACFMQAAWRRYIKRKKLEQLRKEEEE.

This sequence belongs to the cyclic nucleotide-gated cation channel (TC 1.A.1.5) family. In terms of assembly, homotetramer or heterotetramer.

The protein resides in the cell membrane. Functionally, probable cyclic nucleotide-gated ion channel. The chain is Probable cyclic nucleotide-gated ion channel 6 (CNGC6) from Arabidopsis thaliana (Mouse-ear cress).